Here is an 83-residue protein sequence, read N- to C-terminus: Large ribosomal subunit protein bL27 (83 aa).

Residues 1–21 form a disordered region; that stretch reads MAHKRSSGAGRNGRDSNPKYL.

This sequence belongs to the bacterial ribosomal protein bL27 family.

In Kosmotoga olearia (strain ATCC BAA-1733 / DSM 21960 / TBF 19.5.1), this protein is Large ribosomal subunit protein bL27.